The chain runs to 91 residues: Putative transmembrane protein ORF91a (91 aa).

3 consecutive transmembrane segments (helical) span residues 17-37 (TGIS…VGLA), 40-60 (AFLG…LLFM), and 69-89 (GIGF…YIST).

The protein resides in the host membrane. In Acidianus convivator (ABV), this protein is Putative transmembrane protein ORF91a.